A 132-amino-acid polypeptide reads, in one-letter code: Small ribosomal subunit protein uS8 (132 aa).

This sequence belongs to the universal ribosomal protein uS8 family. In terms of assembly, part of the 30S ribosomal subunit. Contacts proteins S5 and S12.

Functionally, one of the primary rRNA binding proteins, it binds directly to 16S rRNA central domain where it helps coordinate assembly of the platform of the 30S subunit. This Bacillus subtilis (strain 168) protein is Small ribosomal subunit protein uS8.